A 101-amino-acid polypeptide reads, in one-letter code: Feather keratin Cos2-2 (101 aa).

An N-acetylserine modification is found at Ser-2.

Belongs to the avian keratin family. As to quaternary structure, the avian keratins (F-ker, S-ker, C-ker and B-ker) are a complex mixture of very similar polypeptides.

The sequence is that of Feather keratin Cos2-2 from Columba livia (Rock dove).